A 202-amino-acid polypeptide reads, in one-letter code: Glycerol-3-phosphate acyltransferase (202 aa).

6 helical membrane passes run 2 to 22 (MIVI…GYVI), 54 to 74 (FLVT…PLWL), 88 to 108 (NGLI…YLGF), 120 to 140 (VILG…FGIL), 141 to 161 (YLTK…VIGA), and 162 to 182 (LLIR…LLII).

It belongs to the PlsY family. As to quaternary structure, probably interacts with PlsX.

It is found in the cell membrane. It carries out the reaction an acyl phosphate + sn-glycerol 3-phosphate = a 1-acyl-sn-glycero-3-phosphate + phosphate. The protein operates within lipid metabolism; phospholipid metabolism. Its function is as follows. Catalyzes the transfer of an acyl group from acyl-phosphate (acyl-PO(4)) to glycerol-3-phosphate (G3P) to form lysophosphatidic acid (LPA). This enzyme utilizes acyl-phosphate as fatty acyl donor, but not acyl-CoA or acyl-ACP. The polypeptide is Glycerol-3-phosphate acyltransferase (Staphylococcus saprophyticus subsp. saprophyticus (strain ATCC 15305 / DSM 20229 / NCIMB 8711 / NCTC 7292 / S-41)).